Consider the following 323-residue polypeptide: MPTYTKLTAMGQYVPGRVVDNDELAAIMDTSDEWIQAHTGIKTRHYAMNDENTSDLATQVAQQLLQKSGLAASAIDLILVTTITPDALTPATACLVQANIGADNAFAFDLSAACAGFTFGLATADKFIRSGQYQNVMVISAEVNSKMMDFQDRTAAVFFGDGAGGALLQATDNPDENSLIAEKLESQGNATVIHSGRVRPITEVAATNYPQTDAFYQVGRDVFQFATTVVPEQMRGLIASAQLTPSDLQYVICHQANLRIIEKIAANLALPMTKFPHNVDHYGNTSSAGVAMALANVFDTLTGPVLLTAFGGGLAYGSVLIKK.

Active-site residues include Cys114 and His254. The segment at Gln255–Arg259 is ACP-binding. Residue Asn284 is part of the active site.

The protein belongs to the thiolase-like superfamily. FabH family. As to quaternary structure, homodimer.

It is found in the cytoplasm. It carries out the reaction malonyl-[ACP] + acetyl-CoA + H(+) = 3-oxobutanoyl-[ACP] + CO2 + CoA. It participates in lipid metabolism; fatty acid biosynthesis. Functionally, catalyzes the condensation reaction of fatty acid synthesis by the addition to an acyl acceptor of two carbons from malonyl-ACP. Catalyzes the first condensation reaction which initiates fatty acid synthesis and may therefore play a role in governing the total rate of fatty acid production. Possesses both acetoacetyl-ACP synthase and acetyl transacylase activities. Its substrate specificity determines the biosynthesis of branched-chain and/or straight-chain of fatty acids. The sequence is that of Beta-ketoacyl-[acyl-carrier-protein] synthase III 1 from Lactiplantibacillus plantarum (strain ATCC BAA-793 / NCIMB 8826 / WCFS1) (Lactobacillus plantarum).